A 971-amino-acid polypeptide reads, in one-letter code: Polyamine-modulated factor 1-binding protein 1 (971 aa).

6 coiled-coil regions span residues 37 to 69 (NKQY…LQAS), 117 to 229 (EKLH…ACSN), 282 to 325 (LHVE…LREE), 355 to 680 (QKLS…SAIQ), 706 to 827 (QDDL…DEKE), and 879 to 916 (IAKL…KAGT).

In terms of tissue distribution, expressed in testis and more specifically in ODF, the sperm tail specific cytoskeletal structure. Also expressed in epididymides and brain.

It is found in the cell projection. The protein resides in the cilium. Its subcellular location is the flagellum. Its function is as follows. Required for normal spermatogenesis. It functions as a scaffold protein that attaches the sperm head-tail connecting piece to the nuclear envelope, thus maintaining sperm head and tail integrity. May also be involved in the general organization of cellular cytoskeleton. The protein is Polyamine-modulated factor 1-binding protein 1 (Pmfbp1) of Rattus norvegicus (Rat).